Consider the following 738-residue polypeptide: Propionyl-CoA carboxylase alpha chain, mitochondrial (738 aa).

Residues 62 to 509 (KFDKILIANR…TTKYLPEVYP (448 aa)) form the Biotin carboxylation domain. ATP-binding positions include Lys177, 209–270 (SREI…PRHI), Glu261, and Asn296. The ATP-grasp domain occupies 181 to 378 (KKIATAARVS…IVQQMLRVAY (198 aa)). Glu336, Glu349, and Asn351 together coordinate Mg(2+). Mn(2+)-binding residues include Glu336, Glu349, and Asn351. Arg353 is an active-site residue. Residue Phe409 coordinates biotin. One can recognise a Biotinyl-binding domain in the interval 663–738 (KAKVDLSTVV…DEGEVLVELE (76 aa)). The residue at position 704 (Lys704) is an N6-biotinyllysine.

In terms of assembly, the holoenzyme is a dodecamer composed of 6 alpha subunits and 6 beta subunits. Interacts with sir-2.2. Biotin is required as a cofactor. It depends on Mg(2+) as a cofactor. Mn(2+) serves as cofactor. The biotin cofactor is covalently attached to the C-terminal biotinyl-binding domain and is required for the catalytic activity.

It localises to the mitochondrion matrix. The enzyme catalyses propanoyl-CoA + hydrogencarbonate + ATP = (S)-methylmalonyl-CoA + ADP + phosphate + H(+). It carries out the reaction butanoyl-CoA + hydrogencarbonate + ATP = (2S)-ethylmalonyl-CoA + ADP + phosphate + H(+). Its pathway is metabolic intermediate metabolism; propanoyl-CoA degradation; succinyl-CoA from propanoyl-CoA: step 1/3. Its function is as follows. This is one of the 2 subunits of the biotin-dependent propionyl-CoA carboxylase (PCC), a mitochondrial enzyme involved in the catabolism of odd chain fatty acids, branched-chain amino acids isoleucine, threonine, methionine, and valine and other metabolites. Propionyl-CoA carboxylase catalyzes the carboxylation of propionyl-CoA/propanoyl-CoA to D-methylmalonyl-CoA/(S)-methylmalonyl-CoA. Within the holoenzyme, the alpha subunit catalyzes the ATP-dependent carboxylation of the biotin carried by the biotin carboxyl carrier (BCC) domain, while the beta subunit then transfers the carboxyl group from carboxylated biotin to propionyl-CoA. Propionyl-CoA carboxylase also significantly acts on butyryl-CoA/butanoyl-CoA, which is converted to ethylmalonyl-CoA/(2S)-ethylmalonyl-CoA. Other alternative minor substrates include (2E)-butenoyl-CoA/crotonoyl-CoA. In Caenorhabditis briggsae, this protein is Propionyl-CoA carboxylase alpha chain, mitochondrial (pcca-1).